The primary structure comprises 2200 residues: Tyrosine-protein phosphatase Lar-like (2200 aa).

An N-terminal signal peptide occupies residues 1-42 (MIQFRNKNNSMNRIARHLRNVARRKGSSLLLFLMLSTVLVAA). Residues N8 and N116 are each glycosylated (N-linked (GlcNAc...) asparagine). The Extracellular portion of the chain corresponds to 43-1497 (KEDDPARLVV…LRGASQKSSP (1455 aa)). 3 Ig-like C2-type domains span residues 47 to 139 (PARL…ASLT), 151 to 240 (PQIE…KAAN), and 250 to 334 (PYFS…TTVI). 2 cysteine pairs are disulfide-bonded: C69–C122 and C172–C225. N-linked (GlcNAc...) asparagine glycosylation is found at N269 and N315. Residues C272 and C318 are joined by a disulfide bond. Fibronectin type-III domains lie at 341 to 434 (PPVN…TKPS), 439 to 535 (APVS…TRQG), 539 to 628 (QPPM…TIAS), 633 to 748 (SPTI…TLED), 752 to 856 (APRN…IPPE), 857 to 956 (APEI…PVGS), 957 to 1053 (PDGE…PDPA), 1058 to 1158 (PPTN…NYMT), and 1181 to 1287 (MVQN…TGPP). A glycan (N-linked (GlcNAc...) asparagine) is linked at N574. Residues N945, N988, N1069, N1141, N1212, and N1330 are each glycosylated (N-linked (GlcNAc...) asparagine). A disordered region spans residues 1355–1392 (LARSLSVSPSKKLKRKASEVGDDSQSASYHPKEKRARR). A helical membrane pass occupies residues 1498 to 1518 (WVGACIAFLVLFSIVGMLICW). The Cytoplasmic portion of the chain corresponds to 1519 to 2200 (WLRCNKKSAG…EYLAAYDNFS (682 aa)). Tyrosine-protein phosphatase domains are found at residues 1647 to 1902 (FQSE…VLDA) and 1933 to 2192 (IDME…AYEY). Substrate is bound by residues D1811, 1843 to 1849 (CSAGIGR), and Q1887. C1843 (phosphocysteine intermediate) is an active-site residue. The active-site Phosphocysteine intermediate is the C2133.

It belongs to the protein-tyrosine phosphatase family. Receptor class 2A subfamily. Both isoforms are ubiquitously expressed in early embryos. In later embryos, larvae and adults expression is highest in the nerve ring, dorsal cord, ventral cord and epithelial tissues.

It localises to the cell junction. Its subcellular location is the adherens junction. The protein resides in the cell membrane. It carries out the reaction O-phospho-L-tyrosyl-[protein] + H2O = L-tyrosyl-[protein] + phosphate. In terms of biological role, has a role in early neural and epidermal development; neuroblast movements during closure of the gastrulation cleft and epidermal morphogenesis. Vab-1 and ptp-3 may function redundantly within the same sets of neuronal precursors. This is Tyrosine-protein phosphatase Lar-like (ptp-3) from Caenorhabditis elegans.